The following is a 286-amino-acid chain: tRNA (guanine-N(7)-)-methyltransferase (286 aa).

Phosphoserine is present on residues Ser-7 and Ser-59. Residues Gly-103, 126 to 127 (EI), 161 to 162 (NA), and Cys-181 contribute to the S-adenosyl-L-methionine site. Asp-184 is an active-site residue. 259–261 (TEE) provides a ligand contact to S-adenosyl-L-methionine.

Belongs to the class I-like SAM-binding methyltransferase superfamily. TrmB family. As to quaternary structure, forms a complex with TRM82.

Its subcellular location is the nucleus. It carries out the reaction guanosine(46) in tRNA + S-adenosyl-L-methionine = N(7)-methylguanosine(46) in tRNA + S-adenosyl-L-homocysteine. It participates in tRNA modification; N(7)-methylguanine-tRNA biosynthesis. In terms of biological role, methyltransferase that catalyzes the formation of N(7)-methylguanine at position 46 (m7G46) in tRNA, a modification required to maintain stability of tRNAs; its absence resulting in tRNA decay. Both the D-stem and T-stem structures of tRNAs are required for efficient methyltransferase activity. The chain is tRNA (guanine-N(7)-)-methyltransferase from Saccharomyces cerevisiae (strain RM11-1a) (Baker's yeast).